Reading from the N-terminus, the 686-residue chain is Probable serine/threonine-protein kinase pdkA (686 aa).

The segment at 1–31 (MENIVITNTSGGGGGGVPSSSTDPPNNTTTT) is disordered. Low complexity predominate over residues 18–31 (PSSSTDPPNNTTTT). In terms of domain architecture, Protein kinase spans 69–449 (FIIGKVLGEG…FDNLKAHPFF (381 aa)). ATP is bound by residues 79-81 (SYG) and Lys-98. The interval 100-144 (LEKKQIIKENKIKYVQIEKEIFCKSNHPNIVKLFFTFRSEQCLYY) is PIF-pocket. Residues 147-149 (ELC) and Asp-153 each bind ATP. The active-site Proton acceptor is the Asp-192. Residues Glu-196 and Asp-210 each contribute to the ATP site. Disordered regions lie at residues 211–321 (FGTG…NTNT) and 481–584 (LFSP…NNIS). A compositionally biased stretch (low complexity) spans 222–257 (SSQQQQQQQQQQQQLPTNSSGNLSSLLNNVNNLSVS). A compositionally biased stretch (polar residues) spans 258–267 (TDLTQQQQNR). Composition is skewed to low complexity over residues 268–279 (TSSVDSASTTDS), 288–321 (TTTT…NTNT), and 503–568 (NSCN…QRSG). The PH domain maps to 593–682 (VIYQGLVWKR…DSIKSVILSS (90 aa)).

It belongs to the protein kinase superfamily. AGC Ser/Thr protein kinase family. PDPK1 subfamily.

It carries out the reaction L-seryl-[protein] + ATP = O-phospho-L-seryl-[protein] + ADP + H(+). The catalysed reaction is L-threonyl-[protein] + ATP = O-phospho-L-threonyl-[protein] + ADP + H(+). This Dictyostelium discoideum (Social amoeba) protein is Probable serine/threonine-protein kinase pdkA (pdkA).